A 1890-amino-acid chain; its full sequence is Callose synthase 9 (1890 aa).

Topologically, residues 1 to 489 are cytoplasmic; that stretch reads MSRAESSWER…EHRTFLHLYH (489 aa). The chain crosses the membrane as a helical span at residues 490–510; sequence SFHRLWIFLAMMFQALAIIAF. Topologically, residues 511–523 are extracellular; the sequence is NKDDLTSRKTLLQ. A helical transmembrane segment spans residues 524–544; that stretch reads ILSLGPTFVVMKFSESVLEVI. Topologically, residues 545–560 are cytoplasmic; that stretch reads MMYGAYSTTRRLAVSR. A helical transmembrane segment spans residues 561-581; it reads IFLRFIWFGLASVFISFLYVK. Residues 582–591 are Extracellular-facing; the sequence is SLKAPNSDSP. Residues 592-612 traverse the membrane as a helical segment; sequence IVQLYLIVIAIYGGVQFFFSI. The Cytoplasmic portion of the chain corresponds to 613–658; the sequence is LMRIPTCHNIANKCDRWPVIRFFKWMRQERHYVGRGMYERTSDFIK. A helical membrane pass occupies residues 659 to 679; the sequence is YLLFWLVVLSAKFSFAYFLQI. Topologically, residues 680–722 are extracellular; sequence KPLVGPTRMIVKQNNIPYSWHDFVSRKNYNALTVASLWAPVVA. The chain crosses the membrane as a helical span at residues 723–743; that stretch reads IYLLDIHIFYTIFSAFLGFLL. Residues 744–1457 are Cytoplasmic-facing; the sequence is GARDRLGEIR…QLLDFFRMMS (714 aa). Residues 1458 to 1478 traverse the membrane as a helical segment; it reads FFFTTVGFYLCTMLTVLTVYI. At 1479–1512 the chain is on the extracellular side; it reads FLYGRAYLALSGVGATIRERAILLDDTALSAALN. A helical membrane pass occupies residues 1513-1533; the sequence is AQFLFQIGVFTAVPMVLGFIL. The Cytoplasmic portion of the chain corresponds to 1534–1539; sequence EQGFLQ. A helical transmembrane segment spans residues 1540–1560; it reads AIVSFITMQFQLCTVFFTFSL. Over 1561–1609 the chain is Extracellular; the sequence is GTRTHYFGRTILHGGARYQATGRGFVVKHIKFSENYRLYSRSHFVKAME. The next 2 helical transmembrane spans lie at 1610-1630 and 1631-1651; these read VILLLVVYLAYGNDEAGAVSY and ILLTVSSWFLAVSWLFAPYLF. The Extracellular segment spans residues 1652 to 1703; sequence NPAGFEWQKVVEDFKEWTNWLFYRGGIGVKGAESWEAWWEEELSHIRTLSGR. Residues 1704-1724 form a helical membrane-spanning segment; the sequence is IMETILSLRFFIFQYGIVYKL. Over 1725–1732 the chain is Cytoplasmic; the sequence is KLQGSDTS. The helical transmembrane segment at 1733-1753 threads the bilayer; the sequence is FAVYGWSWVAFAMIIVLFKVF. At 1754–1768 the chain is on the extracellular side; the sequence is TFSQKISVNFQLLLR. A helical membrane pass occupies residues 1769 to 1789; the sequence is FIQGLSLLMALAGIIVAVVLT. At 1790 to 1795 the chain is on the cytoplasmic side; sequence PLSVTD. The chain crosses the membrane as a helical span at residues 1796–1816; sequence IFACVLAFIPTGWGILSIACA. Residues 1817–1838 lie on the Extracellular side of the membrane; it reads WKPVLKRMGMWKSIRSLARLYD. Residues 1839–1859 form a helical membrane-spanning segment; sequence ALMGMLIFLPVALCSWFPFVS. Topologically, residues 1860-1890 are cytoplasmic; the sequence is TFQTRMMFNQAFSRGLEISLILAGDNPNSGL.

Belongs to the glycosyltransferase 48 family.

It localises to the cell membrane. The catalysed reaction is [(1-&gt;3)-beta-D-glucosyl](n) + UDP-alpha-D-glucose = [(1-&gt;3)-beta-D-glucosyl](n+1) + UDP + H(+). Involved in sporophytic and gametophytic development. Required for normal plant development. During pollen formation, required for the entry of microspores into mitosis and microspore symmetric division. May be required for correct temporal and spatial control of callose deposition during pollen mitosis. During plant growth and development, callose is found as a transitory component of the cell plate in dividing cells, is a major component of pollen mother cell walls and pollen tubes, and is found as a structural component of plasmodesmatal canals. The sequence is that of Callose synthase 9 (CALS9) from Arabidopsis thaliana (Mouse-ear cress).